We begin with the raw amino-acid sequence, 235 residues long: Glutathione S-transferase L3 (235 aa).

A GST N-terminal domain is found at Gly27–Ser108. Residues Cys37 to Pro38, Asn65 to Arg66, Lys79 to Val80, and Glu92 to Ser93 contribute to the glutathione site. The GST C-terminal domain maps to Asn86–Phe230.

It belongs to the GST superfamily. Lambda family.

Its subcellular location is the cytoplasm. The protein localises to the cytosol. It carries out the reaction RX + glutathione = an S-substituted glutathione + a halide anion + H(+). Its function is as follows. Catalyzes the glutathione-dependent reduction of S-glutathionylquercetin to quercetin. The protein is Glutathione S-transferase L3 (GSTL3) of Arabidopsis thaliana (Mouse-ear cress).